The following is a 262-amino-acid chain: MLEQMHEALQRLRQEQPVVLNITNYVSMDFLANCFLALGASPVMSVSDLELEELIGLSSAVYINIGTLDHLFIQRAYRAVDLAVRQSKPVIFDPAGSGATKIRTEVSHHILSHATIIRGNASEILSFGDVPAKTRGMDSANATHDAKDIAVALASECLCGCAVAVTGSEDFITDGKRHATVELGDPLMSRITGMGCSLTGVLAAFRSVIEDSFEATRLGVEYFSLCGMLARERCEGPGLFKAYFLDELYAADFDRMRRYHNQ.

Residue M44 participates in substrate binding. R118 and T166 together coordinate ATP. Substrate is bound at residue G193.

It belongs to the Thz kinase family. Mg(2+) is required as a cofactor.

The enzyme catalyses 5-(2-hydroxyethyl)-4-methylthiazole + ATP = 4-methyl-5-(2-phosphooxyethyl)-thiazole + ADP + H(+). It functions in the pathway cofactor biosynthesis; thiamine diphosphate biosynthesis; 4-methyl-5-(2-phosphoethyl)-thiazole from 5-(2-hydroxyethyl)-4-methylthiazole: step 1/1. Its function is as follows. Catalyzes the phosphorylation of the hydroxyl group of 4-methyl-5-beta-hydroxyethylthiazole (THZ). The chain is Hydroxyethylthiazole kinase from Chlamydia felis (strain Fe/C-56) (Chlamydophila felis).